The sequence spans 255 residues: Large ribosomal subunit protein uL4 (255 aa).

Belongs to the universal ribosomal protein uL4 family. As to quaternary structure, part of the 50S ribosomal subunit.

Functionally, one of the primary rRNA binding proteins, this protein initially binds near the 5'-end of the 23S rRNA. It is important during the early stages of 50S assembly. It makes multiple contacts with different domains of the 23S rRNA in the assembled 50S subunit and ribosome. In terms of biological role, forms part of the polypeptide exit tunnel. This chain is Large ribosomal subunit protein uL4, found in Thermoplasma acidophilum (strain ATCC 25905 / DSM 1728 / JCM 9062 / NBRC 15155 / AMRC-C165).